The chain runs to 699 residues: Condensin complex subunit 2 (699 aa).

Disordered stretches follow at residues methionine 1–alanine 35 and glutamate 176–lysine 203.

It belongs to the CND2 (condensin subunit 2) family. In terms of assembly, component of the condensin complex, which contains the XCAP-E/SMC2 and XCAP-C/SMC4 heterodimer, and three non SMC subunits that probably regulate the complex: XCAP-H/NCAPH, XCAP-D2/NCAPD2 and XCAP-G/NCAPG. Post-translationally, phosphorylated by CDK1. Its phosphorylation, as well as that of XCAP-D2 and XCAP-G subunits, activates the condensin complex and is required for chromosome condensation.

The protein resides in the nucleus. It localises to the cytoplasm. The protein localises to the chromosome. In terms of biological role, regulatory subunit of the condensin complex, a complex required for conversion of interphase chromatin into mitotic-like condense chromosomes. The condensin complex probably introduces positive supercoils into relaxed DNA in the presence of type I topoisomerases and converts nicked DNA into positive knotted forms in the presence of type II topoisomerase. The sequence is that of Condensin complex subunit 2 (ncaph) from Xenopus laevis (African clawed frog).